We begin with the raw amino-acid sequence, 399 residues long: Methylthioribose kinase (399 aa).

ATP-binding positions include N40, K57, and 111-113; that span reads EDL. D229 contributes to the substrate binding site. 246 to 248 serves as a coordination point for ATP; it reads DAE. R344 contacts substrate.

It belongs to the methylthioribose kinase family. As to quaternary structure, homodimer.

It carries out the reaction 5-(methylsulfanyl)-D-ribose + ATP = 5-(methylsulfanyl)-alpha-D-ribose 1-phosphate + ADP + H(+). The protein operates within amino-acid biosynthesis; L-methionine biosynthesis via salvage pathway; S-methyl-5-thio-alpha-D-ribose 1-phosphate from S-methyl-5'-thioadenosine (hydrolase route): step 2/2. In terms of biological role, catalyzes the phosphorylation of methylthioribose into methylthioribose-1-phosphate. In Klebsiella pneumoniae (strain 342), this protein is Methylthioribose kinase.